Reading from the N-terminus, the 507-residue chain is Protein DETOXIFICATION 39 (507 aa).

12 helical membrane passes run 58–78, 92–112, 141–161, 178–198, 209–229, 233–253, 287–307, 318–338, 359–379, 403–423, 433–453, and 459–479; these read VLFR…GMGI, LAAA…MLGM, IVLA…YPIL, IAGL…QKFL, FISA…VYVM, FMGI…SQCF, AVMI…AGLL, SICM…NAAV, WTAT…VIWF, FLAI…VAVG, VNVG…GFTF, and GIWT…LYVT.

The protein belongs to the multi antimicrobial extrusion (MATE) (TC 2.A.66.1) family.

The protein localises to the membrane. This chain is Protein DETOXIFICATION 39, found in Arabidopsis thaliana (Mouse-ear cress).